Reading from the N-terminus, the 503-residue chain is MGCWGRNRGRLLCMLLLTFMFMVLEVVVSRVTASLAMLSDSFHMLSDVLALVVALVAERFARRTHATQKNTFGWIRAEVMGALVNAIFLTGLCFAILLEAVERFIEPHEMQQPLVVLSVGVAGLLVNVLGLCLFHHHSGEGQGAGHGHSHGHGHGHLAKGARKAGRAGVEAGAPPGRAPDQEETNTLVANTSNSNGLKADQAEPEKLRSDDPVDVQVNGNLIQESDNLEAEDNRAGQLNMRGVFLHVLGDALGSVIVVVNALVFYFNWKGCTEDDFCTNPCFPDPCKSSVEIINSTQAPMRDAGPCWVLYLDPTLCIIMVCILLYTTYPLLKESALILLQTVPKQIDIKHLVKELRDVDGVEEVHELHVWQLAGSRIIATAHIKCEDPASYMQVAKTIKDVFHNHGIHATTIQPEFASVGSKSSVLPCELACRTQCALKQCCGTRPQVHSGKDAEKAPTVSISCLELSENLEKKARRTKAEGSLPAVVIEIKNVPNKQPESSL.

The Cytoplasmic segment spans residues 1-10; sequence MGCWGRNRGR. The helical transmembrane segment at 11–31 threads the bilayer; that stretch reads LLCMLLLTFMFMVLEVVVSRV. Residues 32-35 lie on the Extracellular side of the membrane; that stretch reads TASL. A helical membrane pass occupies residues 36-56; the sequence is AMLSDSFHMLSDVLALVVALV. Positions 43 and 47 each coordinate Zn(2+). Over 57–78 the chain is Cytoplasmic; it reads AERFARRTHATQKNTFGWIRAE. Residues 79 to 99 traverse the membrane as a helical segment; that stretch reads VMGALVNAIFLTGLCFAILLE. Topologically, residues 100–113 are extracellular; that stretch reads AVERFIEPHEMQQP. The chain crosses the membrane as a helical span at residues 114–134; sequence LVVLSVGVAGLLVNVLGLCLF. Topologically, residues 135–243 are cytoplasmic; that stretch reads HHHSGEGQGA…RAGQLNMRGV (109 aa). The tract at residues 140–213 is disordered; it reads EGQGAGHGHS…PEKLRSDDPV (74 aa). Residues 145-156 form a 6 X 2 AA approximate repeats of H-G region; sequence GHGHSHGHGHGH. A compositionally biased stretch (basic residues) spans 147 to 165; that stretch reads GHSHGHGHGHLAKGARKAG. The span at 184 to 196 shows a compositional bias: polar residues; the sequence is TNTLVANTSNSNG. Residues 200–211 show a composition bias toward basic and acidic residues; that stretch reads DQAEPEKLRSDD. The chain crosses the membrane as a helical span at residues 244–264; the sequence is FLHVLGDALGSVIVVVNALVF. Zn(2+) contacts are provided by His246 and Asp250. Residues 265–303 are Extracellular-facing; that stretch reads YFNWKGCTEDDFCTNPCFPDPCKSSVEIINSTQAPMRDA. Asn294 is a glycosylation site (N-linked (GlcNAc...) asparagine). The chain crosses the membrane as a helical span at residues 304–324; that stretch reads GPCWVLYLDPTLCIIMVCILL. The Cytoplasmic segment spans residues 325–503; the sequence is YTTYPLLKES…VPNKQPESSL (179 aa). Position 502 is a phosphoserine (Ser502).

This sequence belongs to the cation diffusion facilitator (CDF) transporter (TC 2.A.4) family. SLC30A subfamily. Homodimer. Interacts with TMEM163. Interacts and forms a complex with TMC6 and TMC8; the interaction regulates zinc transport into the ER. In terms of tissue distribution, widely expressed.

The protein resides in the cell membrane. The protein localises to the basolateral cell membrane. It localises to the cytoplasmic vesicle membrane. Its subcellular location is the cytoplasm. It is found in the endoplasmic reticulum membrane. The protein resides in the golgi apparatus membrane. The protein localises to the nucleus membrane. It catalyses the reaction Zn(2+)(in) + 2 H(+)(out) = Zn(2+)(out) + 2 H(+)(in). Zinc ion:proton antiporter that could function at the plasma membrane mediating zinc efflux from cells against its electrochemical gradient protecting them from intracellular zinc accumulation and toxicity. Alternatively, could prevent the transport to the plasma membrane of CACNB2, the L-type calcium channels regulatory subunit, through a yet to be defined mechanism. By modulating the expression of these channels at the plasma membrane, could prevent calcium and zinc influx into cells. By the same mechanism, could also prevent L-type calcium channels-mediated heavy metal influx into cells. In some cells, could also function as a zinc ion:proton antiporter mediating zinc entry into the lumen of cytoplasmic vesicles. In macrophages, can increase zinc ions concentration into the lumen of cytoplasmic vesicles containing engulfed bacteria and could help inactivate them. Forms a complex with TMC6/EVER1 and TMC8/EVER2 at the ER membrane of keratynocytes which facilitates zinc uptake into the ER. Down-regulates the activity of transcription factors induced by zinc and cytokines. The sequence is that of Proton-coupled zinc antiporter SLC30A1 from Mus musculus (Mouse).